Here is a 273-residue protein sequence, read N- to C-terminus: Homeobox protein Nkx-2.2 (273 aa).

Disordered stretches follow at residues 1–56 and 91–131; these read MSLT…LDAV and AASA…KRKR. The span at 20–38 shows a compositional bias: acidic residues; the sequence is DTNDEDGSVAEGPEEESEG. Positions 128-187 form a DNA-binding region, homeobox; that stretch reads KRKRRVLFSKAQTYELERRFRQQRYLSAPEREHLASLIRLTPTQVKIWFQNHRYKMKRAR.

Belongs to the NK-2 homeobox family. Interacts with OLIG2. As to expression, expressed in restricted areas of the developing CNS: the hindbrain and forebrain, and pancreas.

It localises to the nucleus. Functionally, transcriptional activator involved in the development of insulin-producting beta cells in the endocrine pancreas. May also be involved in specifying diencephalic neuromeric boundaries, and in controlling the expression of genes that play a role in axonal guidance. Binds to elements within the NEUROD1 promoter. The sequence is that of Homeobox protein Nkx-2.2 (Nkx2-2) from Mus musculus (Mouse).